Reading from the N-terminus, the 190-residue chain is Ribosome-recycling factor (190 aa).

The protein belongs to the RRF family.

It is found in the cytoplasm. In terms of biological role, responsible for the release of ribosomes from messenger RNA at the termination of protein biosynthesis. May increase the efficiency of translation by recycling ribosomes from one round of translation to another. The sequence is that of Ribosome-recycling factor from Fusobacterium nucleatum subsp. nucleatum (strain ATCC 25586 / DSM 15643 / BCRC 10681 / CIP 101130 / JCM 8532 / KCTC 2640 / LMG 13131 / VPI 4355).